The chain runs to 920 residues: Probable helicase HelY (920 aa).

The Helicase ATP-binding domain occupies 26 to 184 (CAALERGHGV…WVQTVRGDTT (159 aa)). 39-46 (APTGAGKT) provides a ligand contact to ATP. The DEVH box motif lies at 132–135 (DEVH). Residues 265–469 (EVIAILDAEG…SYNMTINLVH (205 aa)) enclose the Helicase C-terminal domain.

The protein belongs to the helicase family. SKI2 subfamily.

This Mycobacterium leprae (strain TN) protein is Probable helicase HelY (helY).